A 206-amino-acid chain; its full sequence is Ribosomal RNA large subunit methyltransferase E (206 aa).

5 residues coordinate S-adenosyl-L-methionine: glycine 60, tryptophan 62, aspartate 80, aspartate 96, and aspartate 121. Lysine 161 (proton acceptor) is an active-site residue.

This sequence belongs to the class I-like SAM-binding methyltransferase superfamily. RNA methyltransferase RlmE family.

It localises to the cytoplasm. It carries out the reaction uridine(2552) in 23S rRNA + S-adenosyl-L-methionine = 2'-O-methyluridine(2552) in 23S rRNA + S-adenosyl-L-homocysteine + H(+). Specifically methylates the uridine in position 2552 of 23S rRNA at the 2'-O position of the ribose in the fully assembled 50S ribosomal subunit. In Saccharophagus degradans (strain 2-40 / ATCC 43961 / DSM 17024), this protein is Ribosomal RNA large subunit methyltransferase E.